Here is a 258-residue protein sequence, read N- to C-terminus: Imidazole glycerol phosphate synthase subunit HisF (258 aa).

Residues aspartate 12 and aspartate 131 contribute to the active site.

The protein belongs to the HisA/HisF family. As to quaternary structure, heterodimer of HisH and HisF.

It localises to the cytoplasm. It carries out the reaction 5-[(5-phospho-1-deoxy-D-ribulos-1-ylimino)methylamino]-1-(5-phospho-beta-D-ribosyl)imidazole-4-carboxamide + L-glutamine = D-erythro-1-(imidazol-4-yl)glycerol 3-phosphate + 5-amino-1-(5-phospho-beta-D-ribosyl)imidazole-4-carboxamide + L-glutamate + H(+). Its pathway is amino-acid biosynthesis; L-histidine biosynthesis; L-histidine from 5-phospho-alpha-D-ribose 1-diphosphate: step 5/9. Functionally, IGPS catalyzes the conversion of PRFAR and glutamine to IGP, AICAR and glutamate. The HisF subunit catalyzes the cyclization activity that produces IGP and AICAR from PRFAR using the ammonia provided by the HisH subunit. This is Imidazole glycerol phosphate synthase subunit HisF from Sinorhizobium fredii (strain NBRC 101917 / NGR234).